The following is a 138-amino-acid chain: Glia maturation factor (138 aa).

The ADF-H domain occupies 3-138 (DNQICDISNE…TEEWLKAKLK (136 aa)).

It belongs to the actin-binding proteins ADF family. GMF subfamily. In ovaries, expressed in follicular epithelium, in polar cells, migrating border cells, and centripedal cells (at protein level).

It is found in the cell projection. It localises to the lamellipodium. The protein localises to the cytoplasm. Its subcellular location is the perinuclear region. The protein resides in the nucleus. It is found in the cell cortex. In terms of biological role, inhibits Arp2/3-mediated actin nucleation. Together with flr, promotes Arp2/3-nucleated actin filament array disassembly. Promotes debranching. Regulates lamellipodial protrusion dynamics possibly by facilitating lamellipodial retraction. In egg chambers, enhances the retraction dynamics of cellular extensions in border cells and thus together with flr plays an important role in directional migration of border cell clusters. This is Glia maturation factor from Drosophila melanogaster (Fruit fly).